The sequence spans 223 residues: Cytotoxic T-lymphocyte protein 4 (223 aa).

The signal sequence occupies residues 1-35 (MACLGLRRYKAQLQLPSRTWPFVALLTLLFIPVFS). In terms of domain architecture, Ig-like V-type spans 36 to 145 (EAIQVTQPSV…PPPYFVGMGN (110 aa)). Over 36–161 (EAIQVTQPSV…IDPEPCPDSD (126 aa)) the chain is Extracellular. The interval 46–50 (VLASS) is homodimerization. 2 disulfides stabilise this stretch: cysteine 58-cysteine 129 and cysteine 85-cysteine 103. Asparagine 108 and asparagine 113 each carry an N-linked (GlcNAc...) asparagine glycan. Residues 134 to 139 (MYPPPY) form an important for interaction with CD80 and CD86 region. Asparagine 145 carries an N-linked (GlcNAc...) asparagine glycan. Residues 150 to 155 (YVIDPE) form a homodimerization region. A helical membrane pass occupies residues 162–182 (FLLWILVAVSLGLFFYSFLVS). The Cytoplasmic portion of the chain corresponds to 183–223 (AVSLSKMLKKRSPLTTGVYVKMPPTEPECEKQFQPYFIPIN). A Phosphotyrosine; by TXK and JAK2 modification is found at tyrosine 201.

In terms of assembly, homodimer; disulfide-linked. Binds to CD80/B7-1 and CD86/B7.2. Interacts with ICOSLG. In terms of processing, N-glycosylation is important for dimerization. Post-translationally, phosphorylation at Tyr-201 prevents binding to the AP-2 adapter complex, blocks endocytosis, and leads to retention of CTLA4 on the cell surface. In terms of tissue distribution, widely expressed with highest levels in lymphoid tissues.

The protein resides in the cell membrane. In terms of biological role, inhibitory receptor acting as a major negative regulator of T-cell responses. The affinity of CTLA4 for its natural B7 family ligands, CD80 and CD86, is considerably stronger than the affinity of their cognate stimulatory coreceptor CD28. This is Cytotoxic T-lymphocyte protein 4 (Ctla4) from Mus musculus (Mouse).